Here is a 274-residue protein sequence, read N- to C-terminus: Thiamine kinase (274 aa).

It belongs to the thiamine kinase family.

The catalysed reaction is thiamine + ATP = thiamine phosphate + ADP + H(+). It participates in cofactor biosynthesis; thiamine diphosphate biosynthesis; thiamine phosphate from thiamine: step 1/1. Catalyzes the ATP-dependent phosphorylation of thiamine to thiamine phosphate. Is involved in thiamine salvage. The sequence is that of Thiamine kinase from Salmonella typhi.